A 299-amino-acid polypeptide reads, in one-letter code: Probable inactive heme oxygenase 2, chloroplastic (299 aa).

Over residues 1 to 15 (MASLLRPTPLLSTPR) the composition is skewed to low complexity. Disordered regions lie at residues 1–20 (MASL…LTHS), 45–70 (LCRS…KQYP), and 96–126 (DLSE…EETW). A chloroplast-targeting transit peptide spans 1–83 (MASLLRPTPL…IGITEEMRFV (83 aa)). The span at 46–57 (CRSTPTPSQQKA) shows a compositional bias: polar residues. The span at 58-67 (SQRKRTRYRK) shows a compositional bias: basic residues. A compositionally biased stretch (acidic residues) spans 105 to 122 (EKEEEEEEEDDDDDDEVK).

Belongs to the heme oxygenase family. As to expression, widely expressed at low levels.

The protein resides in the plastid. The protein localises to the chloroplast. Functionally, probable inactive heme oxygenase. Binds protoporphyrin IX, a precursor for both heme and chlorophyll biosynthesis. Plays a minor role in phytochrome assembly and photomorphogenesis. In Arabidopsis thaliana (Mouse-ear cress), this protein is Probable inactive heme oxygenase 2, chloroplastic (HO2).